Reading from the N-terminus, the 548-residue chain is Cytochrome P450 monooxygenase hepE (548 aa).

A heme-binding site is contributed by Cys-485.

It belongs to the cytochrome P450 family. Heme serves as cofactor.

Its pathway is secondary metabolite biosynthesis. Its function is as follows. Cytochrome P450 monooxygenase; part of the gene cluster that mediates the biosynthesis of heptelidic acid (HA), a sesquiterpene lactone that acts as an inhibitor of glyceraldehyde-3-phosphatedehydrogenase (GAPDH) and a growth inhibitor of the salt-tolerant lactic acid bacteria in soy sauce brewing. This Aspergillus oryzae (strain ATCC 42149 / RIB 40) (Yellow koji mold) protein is Cytochrome P450 monooxygenase hepE.